The primary structure comprises 424 residues: Enolase (424 aa).

Gln-165 is a binding site for (2R)-2-phosphoglycerate. The Proton donor role is filled by Glu-207. Residues Asp-244, Glu-283, and Asp-310 each contribute to the Mg(2+) site. Residues Lys-335, Arg-364, Ser-365, and Lys-386 each coordinate (2R)-2-phosphoglycerate. Lys-335 functions as the Proton acceptor in the catalytic mechanism.

Belongs to the enolase family. Mg(2+) serves as cofactor.

The protein localises to the cytoplasm. The protein resides in the secreted. It localises to the cell surface. It carries out the reaction (2R)-2-phosphoglycerate = phosphoenolpyruvate + H2O. It participates in carbohydrate degradation; glycolysis; pyruvate from D-glyceraldehyde 3-phosphate: step 4/5. Its function is as follows. Catalyzes the reversible conversion of 2-phosphoglycerate (2-PG) into phosphoenolpyruvate (PEP). It is essential for the degradation of carbohydrates via glycolysis. The polypeptide is Enolase (Chlamydia felis (strain Fe/C-56) (Chlamydophila felis)).